The primary structure comprises 321 residues: Lipoyl synthase (321 aa).

[4Fe-4S] cluster-binding residues include Cys60, Cys65, Cys71, Cys86, Cys90, Cys93, and Ser299. A Radical SAM core domain is found at 72–288; it reads WEKKHATFMI…ETIGRTKGFL (217 aa).

The protein belongs to the radical SAM superfamily. Lipoyl synthase family. It depends on [4Fe-4S] cluster as a cofactor.

It is found in the cytoplasm. It carries out the reaction [[Fe-S] cluster scaffold protein carrying a second [4Fe-4S](2+) cluster] + N(6)-octanoyl-L-lysyl-[protein] + 2 oxidized [2Fe-2S]-[ferredoxin] + 2 S-adenosyl-L-methionine + 4 H(+) = [[Fe-S] cluster scaffold protein] + N(6)-[(R)-dihydrolipoyl]-L-lysyl-[protein] + 4 Fe(3+) + 2 hydrogen sulfide + 2 5'-deoxyadenosine + 2 L-methionine + 2 reduced [2Fe-2S]-[ferredoxin]. It participates in protein modification; protein lipoylation via endogenous pathway; protein N(6)-(lipoyl)lysine from octanoyl-[acyl-carrier-protein]: step 2/2. In terms of biological role, catalyzes the radical-mediated insertion of two sulfur atoms into the C-6 and C-8 positions of the octanoyl moiety bound to the lipoyl domains of lipoate-dependent enzymes, thereby converting the octanoylated domains into lipoylated derivatives. The sequence is that of Lipoyl synthase from Brucella anthropi (strain ATCC 49188 / DSM 6882 / CCUG 24695 / JCM 21032 / LMG 3331 / NBRC 15819 / NCTC 12168 / Alc 37) (Ochrobactrum anthropi).